A 116-amino-acid polypeptide reads, in one-letter code: Large ribosomal subunit protein bL19 (116 aa).

The protein belongs to the bacterial ribosomal protein bL19 family.

Its function is as follows. This protein is located at the 30S-50S ribosomal subunit interface and may play a role in the structure and function of the aminoacyl-tRNA binding site. The polypeptide is Large ribosomal subunit protein bL19 (Streptomyces griseus subsp. griseus (strain JCM 4626 / CBS 651.72 / NBRC 13350 / KCC S-0626 / ISP 5235)).